The chain runs to 459 residues: Cysteine--tRNA ligase (459 aa).

C28 is a Zn(2+) binding site. Positions 30–40 (VTIYDLCHIGH) match the 'HIGH' region motif. C209, H234, and E238 together coordinate Zn(2+). A 'KMSKS' region motif is present at residues 266–270 (KMSKS). K269 contributes to the ATP binding site.

Belongs to the class-I aminoacyl-tRNA synthetase family. Monomer. Zn(2+) serves as cofactor.

It is found in the cytoplasm. The enzyme catalyses tRNA(Cys) + L-cysteine + ATP = L-cysteinyl-tRNA(Cys) + AMP + diphosphate. This is Cysteine--tRNA ligase from Shewanella baltica (strain OS223).